The chain runs to 744 residues: Probable methylmalonyl-CoA mutase, mitochondrial (744 aa).

A B12-binding domain is found at 605 to 737; sequence QPRIMVAKMG…EKLEANLPEA (133 aa). Adenosylcob(III)alamin is bound at residue histidine 618.

Belongs to the methylmalonyl-CoA mutase family. In terms of assembly, homodimer. Adenosylcob(III)alamin is required as a cofactor.

The protein localises to the mitochondrion matrix. The catalysed reaction is (R)-methylmalonyl-CoA = succinyl-CoA. Its function is as follows. Involved, in man, in the degradation of several amino acids, odd-chain fatty acids and cholesterol via propionyl-CoA to the tricarboxylic acid cycle. MCM has different functions in other species. The polypeptide is Probable methylmalonyl-CoA mutase, mitochondrial (mmcm-1) (Caenorhabditis elegans).